The sequence spans 165 residues: V-type proton ATPase 16 kDa proteolipid subunit (165 aa).

Residues Met1–Thr10 are Lumenal-facing. The chain crosses the membrane as a helical span at residues Ala11–Gly33. Residues Thr34–Ser55 lie on the Cytoplasmic side of the membrane. A helical transmembrane segment spans residues Ile56–Ile76. Over Ser77–His95 the chain is Lumenal. The helical transmembrane segment at Leu96–Gly117 threads the bilayer. Topologically, residues Asp118 to Lys129 are cytoplasmic. Residues Leu130–Leu155 form a helical membrane-spanning segment. Topologically, residues Ser156–Glu165 are lumenal.

This sequence belongs to the V-ATPase proteolipid subunit family. In terms of assembly, V-ATPase is a heteromultimeric enzyme composed of a peripheral catalytic V1 complex (main components: subunits A, B, C, D, E, and F) attached to an integral membrane V0 proton pore complex (main component: the proteolipid protein; which is present as a hexamer that forms the proton-conducting pore).

It is found in the vacuole membrane. Proton-conducting pore forming subunit of the membrane integral V0 complex of vacuolar ATPase. V-ATPase is responsible for acidifying a variety of intracellular compartments in eukaryotic cells. The protein is V-type proton ATPase 16 kDa proteolipid subunit (CVA16-2) of Gossypium hirsutum (Upland cotton).